A 320-amino-acid chain; its full sequence is Dimethyladenosine transferase (320 aa).

S-adenosyl-L-methionine is bound by residues His-38, Leu-40, Gly-65, Glu-86, Asp-114, and Asn-129.

It belongs to the class I-like SAM-binding methyltransferase superfamily. rRNA adenine N(6)-methyltransferase family.

The catalysed reaction is adenosine(1779)/adenosine(1780) in 18S rRNA + 4 S-adenosyl-L-methionine = N(6)-dimethyladenosine(1779)/N(6)-dimethyladenosine(1780) in 18S rRNA + 4 S-adenosyl-L-homocysteine + 4 H(+). Specifically dimethylates two adjacent adenosines in the loop of a conserved hairpin near the 3'-end of 18S rRNA in the 40S particle. The sequence is that of Dimethyladenosine transferase (DIM1) from Kluyveromyces lactis (strain ATCC 8585 / CBS 2359 / DSM 70799 / NBRC 1267 / NRRL Y-1140 / WM37) (Yeast).